A 159-amino-acid chain; its full sequence is MKVKLICVGKLKERYLKDGISEYQKRLSRFCQFEMIELTDERTPDKASFADNQLIMSKEAQRIHKKIGERDFVIALAIEGKQFPSETFSELISGVTVKGYSTITFIIGGSLGLDSIIKKRANMLMSFGLLTLPHQLMRLVLTEQIYRAFMITKGSPYHK.

S-adenosyl-L-methionine-binding positions include leucine 76, glycine 108, and phenylalanine 127 to leucine 132.

This sequence belongs to the RNA methyltransferase RlmH family. Homodimer.

Its subcellular location is the cytoplasm. The catalysed reaction is pseudouridine(1915) in 23S rRNA + S-adenosyl-L-methionine = N(3)-methylpseudouridine(1915) in 23S rRNA + S-adenosyl-L-homocysteine + H(+). In terms of biological role, specifically methylates the pseudouridine at position 1915 (m3Psi1915) in 23S rRNA. This Streptococcus pyogenes serotype M3 (strain SSI-1) protein is Ribosomal RNA large subunit methyltransferase H.